The following is a 710-amino-acid chain: MMQESATETISNSSMNQNGMSTLSSQLDAGSRDGRSSGDTSSEVSTVELLHLQQQQALQAARQLLLQQQTSGLKSPKSSDKQRPLQVPVSVAMMTPQVITPQQMQQILQQQVLSPQQLQALLQQQQAVMLQQQQLQEFYKKQQEQLHLQLLQQQQQQQQQQQQQQQQQQQQQQQQQQQQQQQQQQQQHPGKQAKEQQQQQQQQQLAAQQLVFQQQLLQMQQLQQQQHLLSLQCQGLISIPPGQAALPVQSLPQAGLSPAEIQQLWKEVTGVHSQEDNGIKHGGLDLTTNNSSSTTSSTTSKASPPITHHSIVNGQSSVLNARRDSSSHEETGASHTLYGHGVCKWPGCESICEDFGQFLKHLNNEHALDDRSTAQCRVQMQVVQQLEIQLSKERERLQAMMTHLHMRPSEPKPSPKPLNLVSSVTMSKNMLETSPQSLPQTPTTPTAPVTPITQGPSVITPASVPNVGAIRRRHSDKYNIPMSSEIAPNYEFYKNADVRPPFTYATLIRQAIMESSDRQLTLNEIYSWFTRTFAYFRRNAATWKNAVRHNLSLHKCFVRVENVKGAVWTVDEVEYQKRRSQKITGSPTLVKNIPTSLGYGAALNASLQAALAESSLPLLSNPGLINNASSGLLQAVHEDLNGSLDHIDSNGNSSPGCSPQPHIHSIHVKEEPVIAEDEDCPMSLVTTANHSPELEDDREIEEEPLSEDLE.

The span at 1 to 28 shows a compositional bias: polar residues; it reads MMQESATETISNSSMNQNGMSTLSSQLD. Disordered regions lie at residues 1–44 and 272–334; these read MMQE…SSEV and HSQE…TGAS. Over residues 273 to 283 the composition is skewed to basic and acidic residues; sequence SQEDNGIKHGG. Low complexity predominate over residues 287 to 300; the sequence is TTNNSSSTTSSTTS. A compositionally biased stretch (polar residues) spans 310 to 319; sequence SIVNGQSSVL. Residues 321–332 are compositionally biased toward basic and acidic residues; sequence ARRDSSSHEETG. A C2H2-type zinc finger spans residues 343 to 366; that stretch reads CKWPGCESICEDFGQFLKHLNNEH. Residues 383-404 are leucine-zipper; sequence VQQLEIQLSKERERLQAMMTHL. The tract at residues 417 to 421 is CTBP1-binding; the sequence is PLNLV. Residues 433–454 are compositionally biased toward low complexity; sequence TSPQSLPQTPTTPTAPVTPITQ. The interval 433 to 460 is disordered; it reads TSPQSLPQTPTTPTAPVTPITQGPSVIT. Residues 499–589 constitute a DNA-binding region (fork-head); it reads RPPFTYATLI…SQKITGSPTL (91 aa). 2 disordered regions span residues 644 to 663 and 673 to 710; these read LDHIDSNGNSSPGCSPQPHI and VIAEDEDCPMSLVTTANHSPELEDDREIEEEPLSEDLE. Acidic residues predominate over residues 694-710; sequence LEDDREIEEEPLSEDLE.

As to quaternary structure, forms homodimers and heterodimers with FOXP1 and FOXP4. Dimerization is required for DNA-binding. Interacts with CTBP1. Interacts with FOXP1. Interacts with TBR1. Interacts with ZMYM2.

It is found in the nucleus. Its function is as follows. Transcriptional repressor that may play a role in the specification and differentiation of lung epithelium. May also play a role in developing neural, gastrointestinal and cardiovascular tissues. Can act with CTBP1 to synergistically repress transcription but CTPBP1 is not essential. Plays a role in synapse formation by regulating SRPX2 levels. The sequence is that of Forkhead box protein P2 (Foxp2) from Rattus norvegicus (Rat).